We begin with the raw amino-acid sequence, 220 residues long: Thiamine-phosphate synthase (220 aa).

4-amino-2-methyl-5-(diphosphooxymethyl)pyrimidine is bound by residues 39 to 43 (QLRDK) and Asn80. Asp81 and Asp100 together coordinate Mg(2+). 4-amino-2-methyl-5-(diphosphooxymethyl)pyrimidine is bound at residue Ser119. 2-[(2R,5Z)-2-carboxy-4-methylthiazol-5(2H)-ylidene]ethyl phosphate is bound at residue 145-147 (TPT). Lys148 provides a ligand contact to 4-amino-2-methyl-5-(diphosphooxymethyl)pyrimidine. Gly176 serves as a coordination point for 2-[(2R,5Z)-2-carboxy-4-methylthiazol-5(2H)-ylidene]ethyl phosphate.

The protein belongs to the thiamine-phosphate synthase family. Mg(2+) is required as a cofactor.

It catalyses the reaction 2-[(2R,5Z)-2-carboxy-4-methylthiazol-5(2H)-ylidene]ethyl phosphate + 4-amino-2-methyl-5-(diphosphooxymethyl)pyrimidine + 2 H(+) = thiamine phosphate + CO2 + diphosphate. The catalysed reaction is 2-(2-carboxy-4-methylthiazol-5-yl)ethyl phosphate + 4-amino-2-methyl-5-(diphosphooxymethyl)pyrimidine + 2 H(+) = thiamine phosphate + CO2 + diphosphate. It carries out the reaction 4-methyl-5-(2-phosphooxyethyl)-thiazole + 4-amino-2-methyl-5-(diphosphooxymethyl)pyrimidine + H(+) = thiamine phosphate + diphosphate. The protein operates within cofactor biosynthesis; thiamine diphosphate biosynthesis; thiamine phosphate from 4-amino-2-methyl-5-diphosphomethylpyrimidine and 4-methyl-5-(2-phosphoethyl)-thiazole: step 1/1. Condenses 4-methyl-5-(beta-hydroxyethyl)thiazole monophosphate (THZ-P) and 2-methyl-4-amino-5-hydroxymethyl pyrimidine pyrophosphate (HMP-PP) to form thiamine monophosphate (TMP). The sequence is that of Thiamine-phosphate synthase from Mycobacterium ulcerans (strain Agy99).